Reading from the N-terminus, the 95-residue chain is ESAT-6-like protein EsxA (95 aa).

Belongs to the WXG100 family. ESAT-6 subfamily. Forms a tight 1:1 complex with EsxB.

The sequence is that of ESAT-6-like protein EsxA from Corynebacterium diphtheriae (strain ATCC 700971 / NCTC 13129 / Biotype gravis).